A 470-amino-acid polypeptide reads, in one-letter code: Ribulose bisphosphate carboxylase large chain (470 aa).

Substrate is bound by residues asparagine 115 and threonine 165. Residue lysine 167 is the Proton acceptor of the active site. Lysine 169 is a binding site for substrate. Mg(2+) contacts are provided by lysine 193, aspartate 195, and glutamate 196. The residue at position 193 (lysine 193) is an N6-carboxylysine. The active-site Proton acceptor is histidine 286. 3 residues coordinate substrate: arginine 287, histidine 319, and serine 371.

It belongs to the RuBisCO large chain family. Type I subfamily. Heterohexadecamer of 8 large chains and 8 small chains. Mg(2+) serves as cofactor.

It localises to the carboxysome. The catalysed reaction is 2 (2R)-3-phosphoglycerate + 2 H(+) = D-ribulose 1,5-bisphosphate + CO2 + H2O. It carries out the reaction D-ribulose 1,5-bisphosphate + O2 = 2-phosphoglycolate + (2R)-3-phosphoglycerate + 2 H(+). In terms of biological role, ruBisCO catalyzes two reactions: the carboxylation of D-ribulose 1,5-bisphosphate, the primary event in carbon dioxide fixation, as well as the oxidative fragmentation of the pentose substrate in the photorespiration process. Both reactions occur simultaneously and in competition at the same active site. In Prochlorococcus marinus (strain NATL1A), this protein is Ribulose bisphosphate carboxylase large chain.